Here is a 152-residue protein sequence, read N- to C-terminus: UPF0311 protein blr7842 (152 aa).

This sequence belongs to the UPF0311 family.

The sequence is that of UPF0311 protein blr7842 from Bradyrhizobium diazoefficiens (strain JCM 10833 / BCRC 13528 / IAM 13628 / NBRC 14792 / USDA 110).